A 172-amino-acid polypeptide reads, in one-letter code: T-cell receptor gamma chain C region C7.5 (172 aa).

The segment at 1–140 is c region; it reads DKKLDADISP…QFTITSAYYT (140 aa). A helical transmembrane segment spans residues 141 to 160; it reads YLLLLLKSVIYLAIISFSLL. The Cytoplasmic portion of the chain corresponds to 161 to 172; it reads RRTSVCCNEKKS.

The protein resides in the membrane. This Mus musculus (Mouse) protein is T-cell receptor gamma chain C region C7.5.